A 514-amino-acid chain; its full sequence is 2,3-bisphosphoglycerate-independent phosphoglycerate mutase (514 aa).

Residues Asp-14 and Ser-64 each coordinate Mn(2+). Residue Ser-64 is the Phosphoserine intermediate of the active site. Substrate-binding positions include His-125, 155–156 (RD), Arg-187, Arg-193, 263–266 (RADR), and Lys-337. Positions 404, 408, 445, 446, and 464 each coordinate Mn(2+).

It belongs to the BPG-independent phosphoglycerate mutase family. Monomer. The cofactor is Mn(2+).

The enzyme catalyses (2R)-2-phosphoglycerate = (2R)-3-phosphoglycerate. It functions in the pathway carbohydrate degradation; glycolysis; pyruvate from D-glyceraldehyde 3-phosphate: step 3/5. Catalyzes the interconversion of 2-phosphoglycerate and 3-phosphoglycerate. The chain is 2,3-bisphosphoglycerate-independent phosphoglycerate mutase from Pseudoalteromonas translucida (strain TAC 125).